The primary structure comprises 107 residues: Toxin MT2730 (107 aa).

Residues 1–42 are disordered; it reads MTHKRTKRQPAIAAGLNAPRRNRVGRQHGWPADVPSAEQRRA.

In terms of biological role, toxic component of a type II toxin-antitoxin (TA) system. Its toxic effect is neutralized by coexpression with cognate antitoxin MT2731. In Mycobacterium tuberculosis (strain CDC 1551 / Oshkosh), this protein is Toxin MT2730.